The primary structure comprises 169 residues: Acetolactate synthase small subunit (169 aa).

The region spanning 8–85 (TLSVLVEDTP…KVVEQEADNS (78 aa)) is the ACT domain.

The protein belongs to the acetolactate synthase small subunit family. Dimer of large and small chains.

It catalyses the reaction 2 pyruvate + H(+) = (2S)-2-acetolactate + CO2. It participates in amino-acid biosynthesis; L-isoleucine biosynthesis; L-isoleucine from 2-oxobutanoate: step 1/4. It functions in the pathway amino-acid biosynthesis; L-valine biosynthesis; L-valine from pyruvate: step 1/4. This is Acetolactate synthase small subunit (ilvH) from Mycobacterium leprae (strain TN).